The sequence spans 86 residues: MKILVLAVVCTVLLQVALSADSEEVRDCIPTRHECTNNQQNCCEGHDCKCDYTEIGGAKKEICYCKKTLWQKTKDKLSTAGDILKS.

The first 19 residues, 1-19 (MKILVLAVVCTVLLQVALS), serve as a signal peptide directing secretion. A propeptide spans 20–26 (ADSEEVR) (removed in mature form). Positions 23–26 (EEVR) match the Processing quadruplet motif motif. Cystine bridges form between cysteine 28/cysteine 43, cysteine 35/cysteine 48, cysteine 42/cysteine 65, and cysteine 50/cysteine 63.

This sequence belongs to the neurotoxin 19 (CSTX) family. Contains 4 disulfide bonds. In terms of processing, cleavage of the propeptide depends on the processing quadruplet motif (XXXR, with at least one of X being E). As to expression, expressed by the venom gland.

The protein localises to the secreted. Insect toxin. This chain is Latartoxin-1b, found in Lachesana tarabaevi (Spider).